Reading from the N-terminus, the 4001-residue chain is Ankyrin repeat and KH domain-containing protein mask (4001 aa).

A compositionally biased stretch (basic and acidic residues) spans 1–14 (MNNDAKNHESDDLN). 3 disordered regions span residues 1–61 (MNND…NRQL), 91–174 (KNEP…GGGS), and 391–494 (DTDT…FLLD). A compositionally biased stretch (polar residues) spans 15-30 (VRSTAYFNQQTTTNQP). Positions 38–61 (NNTGSGSGSNNNNNNTNQNPNRQL) are enriched in low complexity. Over residues 94 to 117 (PLTTTESSGVLTNTPLPSNSRLKV) the composition is skewed to polar residues. Over residues 118-159 (NNNNNTNNTAKMSGTSSSQSSATPTPPTASSSTTTTTTTNIS) the composition is skewed to low complexity. Positions 160 to 174 (TGGGGSGSSGGGGGS) are enriched in gly residues. 2 stretches are compositionally biased toward acidic residues: residues 408–425 (SESE…ESDP) and 434–486 (VRED…EDAP). At Ser501 the chain carries Phosphoserine. 15 ANK repeats span residues 546–575 (SGFS…NVNL), 584–614 (DGES…QVED), 618–647 (KDST…DVNA), 651–680 (TGNT…NVEE), 684–713 (NGHT…GINT), 718–747 (FKES…DQEH), 751–780 (EMHT…QVNM), 784–813 (SFES…NIEE), 817–846 (EGYT…NINA), 851–880 (TQET…NLEL), 881–910 (GAST…NVHA), 914–943 (TGDT…ELEH), 947–976 (GGRT…NVNK), 981–1011 (NDHT…PFHK), and 1014–1043 (DNST…ISPT). 2 disordered regions span residues 1046–1067 (AASA…NQMR) and 1306–1376 (QPGE…PTAL). Residues 1367–1376 (DNNQPVPTAL) are compositionally biased toward polar residues. 2 positions are modified to phosphoserine: Ser1389 and Ser1588. Disordered stretches follow at residues 1583–1612 (GDQP…RLGS), 1646–1669 (SDLE…ENTL), 1682–1779 (EDGI…SLPL), 1852–1872 (VVHQ…DGSA), 2084–2108 (MAQH…QQLH), and 2225–2256 (TPAP…KERR). Composition is skewed to acidic residues over residues 1646–1657 (SDLESECEDDAE), 1685–1704 (IIVE…EEQD), and 1716–1759 (DDED…EPDS). Residues 1760-1776 (DQGTGNNNNNSKSGASS) show a composition bias toward low complexity. A compositionally biased stretch (low complexity) spans 2084–2093 (MAQHQAQQQQ). Residues 2228-2237 (PSSGVSSTKS) are compositionally biased toward polar residues. 10 ANK repeats span residues 2312-2341 (NHDT…NIEH), 2345-2374 (KGFT…ELEA), 2379-2408 (TKDT…NKEH), 2412-2441 (SDYT…EINS), 2447-2476 (LGIS…DINA), 2481-2510 (NRNT…NVEH), 2514-2543 (TGLT…DVNA), 2549-2578 (SRDT…SVEV), 2582-2611 (KGNS…DIDS), and 2615-2644 (RRVS…QFPS). Positions 2674–2732 (AKEAQAVKANKNASILLEELDLERTREESRKAAAARRRERKKKKKMEKKEEKRRQQQGN) form a coiled coil. Position 2687 is a phosphoserine (Ser2687). Phosphothreonine is present on Thr2698. The tract at residues 2699–3033 (REESRKAAAA…TSTTTAASSV (335 aa)) is disordered. Residues 2706–2719 (AAARRRERKKKKKM) are compositionally biased toward basic residues. Acidic residues predominate over residues 2739–2762 (MQGDDDDASDKDDDSDKDDEDEEA). A phosphoserine mark is found at Ser2747 and Ser2753. Positions 2793–2810 (SQSAQAAEAAANSVSTNS) are enriched in low complexity. A compositionally biased stretch (polar residues) spans 2828 to 2839 (EPTQPVITSNSV). The segment covering 2868–2886 (RQLDVKKEEPALKKKEEKN) has biased composition (basic and acidic residues). Residues 2906-2941 (ALPAKQQPSSSSKLQSSESASNINSSTATNTSSANT) show a composition bias toward low complexity. Polar residues predominate over residues 2950 to 2960 (ASQTASATTLN). The span at 2963–2975 (KRTEVDGWKEVVR) shows a compositional bias: basic and acidic residues. The segment covering 2995-3004 (TATSSATSVQ) has biased composition (polar residues). The span at 3012–3032 (ANSSSNSSSSLTTSTTTAASS) shows a compositional bias: low complexity. Residues 3036–3100 (MTCKKVQVPV…DATKQAHMLI (65 aa)) enclose the KH domain. Low complexity-rich tracts occupy residues 3156–3178 (ASTT…ASYS), 3195–3227 (SGRS…AGSS), and 3244–3257 (NGVI…SSKS). 4 disordered regions span residues 3156 to 3329 (ASTT…GQGG), 3383 to 3457 (KPIA…QTSQ), 3520 to 3636 (AVGD…PPTA), and 3744 to 3786 (IFPQ…GGAA). The span at 3262–3278 (QKSSTTLGKSSTVSPGA) shows a compositional bias: polar residues. Residues 3396–3416 (GSPTQVQQQHQTQQQQQQQLP) show a composition bias toward low complexity. Residues 3417–3427 (QPAPVPGPQPQ) are compositionally biased toward pro residues. Residues 3428-3457 (QQPLQQQQQQQAPQQQPQQPNQQQQPQTSQ) show a composition bias toward low complexity. The span at 3539 to 3559 (NILSSPVGSSKASSNHSTSPP) shows a compositional bias: polar residues. The span at 3565–3577 (QQQQQQQPQSSQQ) shows a compositional bias: low complexity. Phosphoserine is present on Ser3596. The segment covering 3774 to 3786 (PPGTGARQPGGAA) has biased composition (low complexity). Residues Ser3820, Ser3822, and Ser3825 each carry the phosphoserine modification. The tract at residues 3876–3945 (KAQPPGLQQP…HNMQAPPNMS (70 aa)) is disordered. Low complexity predominate over residues 3891–3910 (SQQQQQQPLNWLKQQPQQQQ).

May interact with Unc-89 (via protein kinase domain 1 or 2). In terms of tissue distribution, expressed ubiquitously in eye imaginal disk, slightly higher expression is seen in presumptive photoreceptors. Expressed in indirect flight muscle (IFM) (at protein level).

Its subcellular location is the cytoplasm. It localises to the myofibril. It is found in the sarcomere. The protein resides in the z line. The protein localises to the m line. Mediator of receptor tyrosine kinase (RTK) signaling, and may act either downstream of MAPK or transduce signaling through a parallel branch of the RTK pathway. Required for the development and organization of indirect flight muscle sarcomeres by regulating the formation of M line and H zone and the correct assembly of thick and thin filaments in the sarcomere. The polypeptide is Ankyrin repeat and KH domain-containing protein mask (Drosophila melanogaster (Fruit fly)).